The sequence spans 350 residues: Methylthioribose-1-phosphate isomerase (350 aa).

Substrate-binding positions include Arg47–Ala49, Arg90, and Gln197. Catalysis depends on Asp238, which acts as the Proton donor. Asn248–Lys249 serves as a coordination point for substrate.

This sequence belongs to the eIF-2B alpha/beta/delta subunits family. MtnA subfamily.

It carries out the reaction 5-(methylsulfanyl)-alpha-D-ribose 1-phosphate = 5-(methylsulfanyl)-D-ribulose 1-phosphate. It functions in the pathway amino-acid biosynthesis; L-methionine biosynthesis via salvage pathway; L-methionine from S-methyl-5-thio-alpha-D-ribose 1-phosphate: step 1/6. Its function is as follows. Catalyzes the interconversion of methylthioribose-1-phosphate (MTR-1-P) into methylthioribulose-1-phosphate (MTRu-1-P). This Nitratidesulfovibrio vulgaris (strain DP4) (Desulfovibrio vulgaris) protein is Methylthioribose-1-phosphate isomerase.